The primary structure comprises 524 residues: Probable cytochrome P450 12c1, mitochondrial (524 aa).

Position 470 (Cys-470) interacts with heme.

It belongs to the cytochrome P450 family. The cofactor is heme.

The protein resides in the mitochondrion membrane. The protein is Probable cytochrome P450 12c1, mitochondrial (Cyp12c1) of Drosophila melanogaster (Fruit fly).